Consider the following 136-residue polypeptide: Histone H3 (136 aa).

It belongs to the histone H3 family. The nucleosome is a histone octamer containing two molecules each of H2A, H2B, H3 and H4 assembled in one H3-H4 heterotetramer and two H2A-H2B heterodimers. The octamer wraps approximately 147 bp of DNA.

Its subcellular location is the nucleomorph. It localises to the chromosome. Core component of nucleosome. Nucleosomes wrap and compact DNA into chromatin, limiting DNA accessibility to the cellular machineries which require DNA as a template. Histones thereby play a central role in transcription regulation, DNA repair, DNA replication and chromosomal stability. DNA accessibility is regulated via a complex set of post-translational modifications of histones, also called histone code, and nucleosome remodeling. This Guillardia theta (Cryptophyte) protein is Histone H3.